A 320-amino-acid polypeptide reads, in one-letter code: Beta-carotene 3-hydroxylase, chloroplastic (320 aa).

Residues 1–78 (METQFLVSGR…EKELRGKLVV (78 aa)) constitute a chloroplast transit peptide. The next 2 membrane-spanning stretches (helical) occupy residues 118 to 138 (YLVAAVMSSFGITSMAVLSVY) and 152 to 172 (LSEMFGTFALSVGAAVGMEFW). The Fatty acid hydroxylase domain maps to 165-292 (AAVGMEFWAR…KFNGVPYGLF (128 aa)). The Histidine box-1 motif lies at 177 to 182 (HEALWH). Residues 189 to 193 (HESHH) carry the Histidine box-2 motif. Helical transmembrane passes span 204-224 (DIFAIINAVPAIALLSYGFFH) and 228-248 (IPGLCFGAGLGITVFGMAYMF). The Histidine box-3 motif lies at 250–255 (HDGLVH). The Histidine box-4 motif lies at 276-280 (HTLHH).

This sequence belongs to the sterol desaturase family.

Its subcellular location is the plastid. The protein resides in the chloroplast membrane. The enzyme catalyses all-trans-beta-carotene + 4 reduced [2Fe-2S]-[ferredoxin] + 2 O2 + 4 H(+) = all-trans-zeaxanthin + 4 oxidized [2Fe-2S]-[ferredoxin] + 2 H2O. Its function is as follows. Nonheme diiron monooxygenase involved in the biosynthesis of xanthophylls. Specific for beta-ring hydroxylations of beta-carotene. Uses ferredoxin as an electron donor. In Gentiana lutea (Yellow gentian), this protein is Beta-carotene 3-hydroxylase, chloroplastic (BHY).